The primary structure comprises 289 residues: Protease HtpX homolog (289 aa).

2 helical membrane passes run 8 to 28 (LALLAALSGLLIAISYWVIGG) and 29 to 49 (SSGLIIGIGLAAVTNLLSWYQ). Residue histidine 132 participates in Zn(2+) binding. Residue glutamate 133 is part of the active site. Residue histidine 136 coordinates Zn(2+). 2 consecutive transmembrane segments (helical) span residues 151–171 (VAGAISFLAQMVSYSLWFGGI) and 183–203 (LGVLLTVVLAPIAATIIQLAI). Glutamate 208 serves as a coordination point for Zn(2+).

The protein belongs to the peptidase M48B family. Zn(2+) is required as a cofactor.

The protein localises to the cell inner membrane. The chain is Protease HtpX homolog from Trichormus variabilis (strain ATCC 29413 / PCC 7937) (Anabaena variabilis).